We begin with the raw amino-acid sequence, 371 residues long: Photosynthetic reaction center cytochrome c subunit (371 aa).

M114, C127, C130, H131, M153, H167, C178, C181, H182, M267, C278, C281, H282, C339, C342, and H343 together coordinate heme.

In terms of assembly, component of the photosynthetic reaction center composed of protein subunits L (PufL), M (PufM), H (PuhA) and cytochrome C (PufC). The reaction center interacts with light-harvesting antenna complex LH1. Binds 4 heme groups per subunit.

It localises to the cellular chromatophore membrane. Functionally, the reaction center of purple bacteria contains a tightly bound cytochrome molecule which re-reduces the photo oxidized primary electron donor. The chain is Photosynthetic reaction center cytochrome c subunit (pufC) from Roseobacter denitrificans (strain ATCC 33942 / OCh 114) (Erythrobacter sp. (strain OCh 114)).